Reading from the N-terminus, the 459-residue chain is Ribulose bisphosphate carboxylase (459 aa).

Residue N111 coordinates substrate. The active-site Proton acceptor is the K166. K168 provides a ligand contact to substrate. Residues K191, D193, and E194 each contribute to the Mg(2+) site. The residue at position 191 (K191) is an N6-carboxylysine. H287 (proton acceptor) is an active-site residue. Substrate-binding residues include R288, H321, and S368.

This sequence belongs to the RuBisCO large chain family. Type II subfamily. As to quaternary structure, homodimer. Requires Mg(2+) as cofactor.

It carries out the reaction 2 (2R)-3-phosphoglycerate + 2 H(+) = D-ribulose 1,5-bisphosphate + CO2 + H2O. The catalysed reaction is D-ribulose 1,5-bisphosphate + O2 = 2-phosphoglycolate + (2R)-3-phosphoglycerate + 2 H(+). Functionally, ruBisCO catalyzes two reactions: the carboxylation of D-ribulose 1,5-bisphosphate, the primary event in carbon dioxide fixation, as well as the oxidative fragmentation of the pentose substrate. Both reactions occur simultaneously and in competition at the same active site. This is Ribulose bisphosphate carboxylase from Cereibacter sphaeroides (strain ATCC 17029 / ATH 2.4.9) (Rhodobacter sphaeroides).